The chain runs to 101 residues: Secreted RxLR effector protein 64 (101 aa).

Positions 1 to 23 (MMSPPMTTTLMFILNYAIISFHG) are cleaved as a signal peptide. The short motif at 48-51 (RELR) is the RxLR element. A helical transmembrane segment spans residues 67–87 (LQPILPLPLCLPFPLVPASIF).

This sequence belongs to the RxLR effector family.

It is found in the secreted. The protein resides in the host cytoplasm. It localises to the host nucleus. Its subcellular location is the membrane. Its function is as follows. Effector that acts as a broad suppressor of cell death to interrupt plant immunity. Inhibits cell death induced by cell death-inducing proteins, including the PAMP elicitor INF1 from P.infestans. This Plasmopara viticola (Downy mildew of grapevine) protein is Secreted RxLR effector protein 64.